A 3108-amino-acid chain; its full sequence is Probable polyketide synthase 39 (3108 aa).

Positions 9 to 440 constitute a Ketosynthase family 3 (KS3) domain; that stretch reads DDDVAVIGIG…GSNVCLILSE (432 aa). Residues C181, H320, and H363 each act as for beta-ketoacyl synthase activity in the active site. The tract at residues 643–676 is acyl/malonyl transferase; the sequence is GVSADIIIGHSLGEISSAYCSGMIDFQTLCYLTY. The active-site For acyl/malonyl transferase activity is the S653. An N-terminal hotdog fold region spans residues 939-1068; it reads HEKIKSEGPS…GNFSLFKHNI (130 aa). The 327-residue stretch at 939-1265 folds into the PKS/mFAS DH domain; that stretch reads HEKIKSEGPS…CTIAASNPDS (327 aa). H980 acts as the Proton acceptor; for dehydratase activity in catalysis. Positions 1085–1265 are C-terminal hotdog fold; it reads NFTSISKQDL…CTIAASNPDS (181 aa). D1157 acts as the Proton donor; for dehydratase activity in catalysis. Residues 1375–1435 form a disordered region; that stretch reads NNNNNNNNNN…NNNNNNNNNN (61 aa). In terms of domain architecture, Carrier spans 2566 to 2643; it reads GNNEIIHSTI…QSIEIIKSAL (78 aa). Position 2603 is an O-(pantetheine 4'-phosphoryl)serine (S2603). A helical transmembrane segment spans residues 2702–2722; that stretch reads IFLTGSTGFLGAYLLMELIKM.

The cofactor is pantetheine 4'-phosphate.

The protein localises to the membrane. Probable polyketide synthase. This is Probable polyketide synthase 39 (pks39) from Dictyostelium discoideum (Social amoeba).